Consider the following 391-residue polypeptide: GTPase Obg (391 aa).

Residues 1 to 159 (MKFVDEAVVK…REIRLELLLL (159 aa)) enclose the Obg domain. Residues 160 to 333 (ADVGMLGLPN…LCYKLADFME (174 aa)) enclose the OBG-type G domain. Residues 166–173 (GLPNAGKS), 191–195 (FTTLI), 213–216 (DIPG), 283–286 (NKTD), and 314–316 (SAI) contribute to the GTP site. The Mg(2+) site is built by serine 173 and threonine 193. The segment covering 367-383 (TEEDDDDWDDCDDEDDD) has biased composition (acidic residues). Positions 367–391 (TEEDDDDWDDCDDEDDDGHVVYVRD) are disordered.

It belongs to the TRAFAC class OBG-HflX-like GTPase superfamily. OBG GTPase family. In terms of assembly, monomer. It depends on Mg(2+) as a cofactor.

The protein localises to the cytoplasm. An essential GTPase which binds GTP, GDP and possibly (p)ppGpp with moderate affinity, with high nucleotide exchange rates and a fairly low GTP hydrolysis rate. Plays a role in control of the cell cycle, stress response, ribosome biogenesis and in those bacteria that undergo differentiation, in morphogenesis control. The polypeptide is GTPase Obg (Vibrio campbellii (strain ATCC BAA-1116)).